Consider the following 87-residue polypeptide: Envelope glycoprotein N (87 aa).

An N-terminal signal peptide occupies residues 1-24; that stretch reads MGSITASFILITMQILFFCEDSSG. The Virion surface portion of the chain corresponds to 25-48; sequence EPNFAERNFWHASCSARGVYIDGS. A helical transmembrane segment spans residues 49–69; that stretch reads MITTLFFYASLLGVCVALISL. The Intravirion portion of the chain corresponds to 70-87; sequence AYHACFRLFTRSVLRSTW.

The protein belongs to the herpesviridae glycoprotein N family. As to quaternary structure, interacts (via N-terminus) with gM (via N-terminus). The gM-gN heterodimer forms the gCII complex.

It localises to the virion membrane. It is found in the host membrane. The protein resides in the host Golgi apparatus. Its subcellular location is the host trans-Golgi network. Functionally, envelope glycoprotein necessary for proper maturation of gM and modulation of its membrane fusion activity. Also plays a critical role in virion morphogenesis. The chain is Envelope glycoprotein N from Varicella-zoster virus (strain Dumas) (HHV-3).